The sequence spans 396 residues: Elongation factor Tu (396 aa).

The 197-residue stretch at 10–206 (KPHINVGTIG…QMDAYIPEPQ (197 aa)) folds into the tr-type G domain. Positions 19 to 26 (GHVDHGKT) are G1. 19–26 (GHVDHGKT) provides a ligand contact to GTP. Threonine 26 provides a ligand contact to Mg(2+). Residues 60–64 (GITIA) are G2. A G3 region spans residues 81–84 (DCPG). Residues 81 to 85 (DCPGH) and 136 to 139 (NKAD) each bind GTP. The tract at residues 136–139 (NKAD) is G4. The tract at residues 174-176 (SAL) is G5.

This sequence belongs to the TRAFAC class translation factor GTPase superfamily. Classic translation factor GTPase family. EF-Tu/EF-1A subfamily. In terms of assembly, monomer.

Its subcellular location is the cytoplasm. The enzyme catalyses GTP + H2O = GDP + phosphate + H(+). Functionally, GTP hydrolase that promotes the GTP-dependent binding of aminoacyl-tRNA to the A-site of ribosomes during protein biosynthesis. The polypeptide is Elongation factor Tu (Nitrosococcus oceani (strain ATCC 19707 / BCRC 17464 / JCM 30415 / NCIMB 11848 / C-107)).